A 354-amino-acid chain; its full sequence is Uroporphyrinogen decarboxylase (354 aa).

Substrate is bound by residues 27 to 31 (RQAGR), Asp-77, Tyr-154, Thr-209, and His-327.

This sequence belongs to the uroporphyrinogen decarboxylase family. Homodimer.

The protein resides in the cytoplasm. The catalysed reaction is uroporphyrinogen III + 4 H(+) = coproporphyrinogen III + 4 CO2. It participates in porphyrin-containing compound metabolism; protoporphyrin-IX biosynthesis; coproporphyrinogen-III from 5-aminolevulinate: step 4/4. In terms of biological role, catalyzes the decarboxylation of four acetate groups of uroporphyrinogen-III to yield coproporphyrinogen-III. The chain is Uroporphyrinogen decarboxylase from Klebsiella pneumoniae (strain 342).